The following is a 1061-amino-acid chain: DNA polymerase (1061 aa).

The interval 773-792 (NSEAEESDEDQGPAPFYSPP) is disordered.

This sequence belongs to the DNA polymerase type-B family. Heterodimer with the terminal protein; this heterodimer binds to bp 9 to 18 of the genome. Forms a complex with viral pTP, DBP and hosts NFIA and POU2F1/OCT1 for initiation of replication.

It localises to the host nucleus. It carries out the reaction DNA(n) + a 2'-deoxyribonucleoside 5'-triphosphate = DNA(n+1) + diphosphate. Its function is as follows. Eukaryotic-type DNA polymerase involved in viral genomic replication. DNA synthesis is protein primed, and acts in a strand displacement replication. Assembles in complex with viral pTP, DBP, host NFIA and host POU2F1/OCT1 on viral origin of replication. The polymerase covalently transfers dCMP onto pTP, thereby initiating complementary strand synthesis. This chain is DNA polymerase, found in Human adenovirus A serotype 12 (HAdV-12).